The chain runs to 175 residues: Large ribosomal subunit protein bL17m (175 aa).

The transit peptide at 1–8 (MRLSVAAA) directs the protein to the mitochondrion. The interval 155 to 175 (DLRQSQEASNHSSHTAQTPGI) is disordered. Residues 161-175 (EASNHSSHTAQTPGI) are compositionally biased toward polar residues.

The protein belongs to the bacterial ribosomal protein bL17 family. In terms of assembly, component of the mitochondrial large ribosomal subunit (mt-LSU). Mature mammalian 55S mitochondrial ribosomes consist of a small (28S) and a large (39S) subunit. The 28S small subunit contains a 12S ribosomal RNA (12S mt-rRNA) and 30 different proteins. The 39S large subunit contains a 16S rRNA (16S mt-rRNA), a copy of mitochondrial valine transfer RNA (mt-tRNA(Val)), which plays an integral structural role, and 52 different proteins. In terms of tissue distribution, detected in adrenal gland, mammary gland and adipose tissue.

The protein localises to the mitochondrion. This is Large ribosomal subunit protein bL17m (MRPL17) from Homo sapiens (Human).